A 461-amino-acid polypeptide reads, in one-letter code: Ribonuclease inhibitor (461 aa).

Position 2 is an N-acetylserine (Ser-2). Positions Ser-2 to Gln-11 are 2 X 5 AA tandem repeats of S-L-D-I-Q. LRR repeat units lie at residues Trp-20–Ile-48, Ser-49–Val-76, Leu-77–Leu-105, Ser-106–Leu-133, Cys-134–Leu-162, Ala-163–Leu-190, Cys-191–Leu-219, Cys-220–Leu-247, Cys-248–Leu-276, Cys-277–Leu-304, Cys-305–Phe-333, Ser-334–Leu-361, Cys-362–Leu-390, Ala-391–Leu-418, and Val-419–Leu-447. Ser-91 is subject to Phosphoserine.

Forms high-affinity heterodimers with RNASE1, ANG and RNASE2.

It localises to the cytoplasm. Its subcellular location is the nucleus. Functionally, ribonuclease inhibitor which inhibits RNASE1, RNASE2 and angiogenin (ANG). May play a role in redox homeostasis. Required to inhibit the cytotoxic tRNA ribonuclease activity of ANG in the cytoplasm in absence of stress. Relocates to the nucleus in response to stress, relieving inhibition of ANG in the cytoplasm, and inhibiting the angiogenic activity of ANG in the nucleus. In Pan troglodytes (Chimpanzee), this protein is Ribonuclease inhibitor (RNH1).